Reading from the N-terminus, the 557-residue chain is Leucine-rich glioma-inactivated protein 1 (557 aa).

An N-terminal signal peptide occupies residues 1–34 (MESESSRRMGNACIPLKRIAYFLCLFSVVLLTEG). An LRRNT domain is found at 35-72 (KKPAKPKCPAVCTCSKDNALCENARSIPRTVPPDVISL). 3 LRR repeats span residues 92-113 (SLQL…AFIG), 116-137 (HLEY…TFRG), and 140-161 (SLIH…IFKG). In terms of domain architecture, LRRCT spans 173-223 (NAFNCDCKLKWLVEWLGHTNATVEDIYCEGPPEYKKRKINSLSPKDFDCII). Asn-192 carries an N-linked (GlcNAc...) asparagine glycan. EAR repeat units lie at residues 225–267 (EFAK…EWDH), 271–313 (TFRN…KRDG), 317–364 (KFIK…KWNG), 366–415 (GFYS…QWSK), 419–462 (LFTN…KWGG), 464–506 (SFQD…NWDA), and 510–552 (KFVK…KHVI). Asn-277 is a glycosylation site (N-linked (GlcNAc...) asparagine). Asn-422 is a glycosylation site (N-linked (GlcNAc...) asparagine).

Oligomer. Interacts with KCNA1 within a complex containing KCNA1, KCNA4 and KCNAB1. Part of a complex containing ADAM22, DLG4/PSD95 and CACNG2 (stargazin). Can bind to ADAM11 and ADAM23. In terms of processing, glycosylated. Expressed in the brain (at protein level). Expressed in cerebellar cortex basket cell terminals (at protein level). Highly expressed in the dentate gyrus and CA3 field of the hippocampus.

The protein resides in the secreted. The protein localises to the synapse. Its subcellular location is the cytoplasm. It localises to the golgi apparatus. It is found in the endoplasmic reticulum. Regulates voltage-gated potassium channels assembled from KCNA1, KCNA4 and KCNAB1. It slows down channel inactivation by precluding channel closure mediated by the KCNAB1 subunit. Ligand for ADAM22 that positively regulates synaptic transmission mediated by AMPA-type glutamate receptors. Plays a role in suppressing the production of MMP1/3 through the phosphatidylinositol 3-kinase/ERK pathway. The protein is Leucine-rich glioma-inactivated protein 1 of Mus musculus (Mouse).